The chain runs to 629 residues: tRNA uridine 5-carboxymethylaminomethyl modification enzyme MnmG (629 aa).

Position 14-19 (14-19 (GAGHAG)) interacts with FAD. 274-288 (GPRYCPSIEDKVVRF) is a binding site for NAD(+).

This sequence belongs to the MnmG family. In terms of assembly, homodimer. Heterotetramer of two MnmE and two MnmG subunits. The cofactor is FAD.

Its subcellular location is the cytoplasm. Its function is as follows. NAD-binding protein involved in the addition of a carboxymethylaminomethyl (cmnm) group at the wobble position (U34) of certain tRNAs, forming tRNA-cmnm(5)s(2)U34. The chain is tRNA uridine 5-carboxymethylaminomethyl modification enzyme MnmG from Xylella fastidiosa (strain Temecula1 / ATCC 700964).